A 302-amino-acid polypeptide reads, in one-letter code: Glycine--tRNA ligase alpha subunit (302 aa).

The protein belongs to the class-II aminoacyl-tRNA synthetase family. In terms of assembly, tetramer of two alpha and two beta subunits.

It localises to the cytoplasm. The catalysed reaction is tRNA(Gly) + glycine + ATP = glycyl-tRNA(Gly) + AMP + diphosphate. The sequence is that of Glycine--tRNA ligase alpha subunit from Enterococcus faecalis (strain ATCC 700802 / V583).